We begin with the raw amino-acid sequence, 542 residues long: Protein MGF 505-11L (542 aa).

It belongs to the asfivirus MGF 505 family.

In terms of biological role, plays a role in virus cell tropism, and may be required for efficient virus replication in macrophages. This is Protein MGF 505-11L from African swine fever virus (isolate Tick/Malawi/Lil 20-1/1983) (ASFV).